We begin with the raw amino-acid sequence, 842 residues long: Outer membrane usher protein LpfC (842 aa).

The signal sequence occupies residues 1-21; it reads MTWTHLPLGNKTSRFTQSALA. Cysteines 819 and 841 form a disulfide.

This sequence belongs to the fimbrial export usher family.

The protein resides in the cell outer membrane. In terms of biological role, involved in the export and assembly of LpfA fimbrial subunits across the outer membrane. This Salmonella typhimurium (strain LT2 / SGSC1412 / ATCC 700720) protein is Outer membrane usher protein LpfC (lpfC).